The chain runs to 123 residues: NADH-quinone oxidoreductase subunit A (123 aa).

3 consecutive transmembrane segments (helical) span residues Tyr-11–Leu-31, Leu-68–Ile-88, and Ile-93–Ile-113.

The protein belongs to the complex I subunit 3 family. In terms of assembly, NDH-1 is composed of 14 different subunits. Subunits NuoA, H, J, K, L, M, N constitute the membrane sector of the complex.

It is found in the cell inner membrane. The enzyme catalyses a quinone + NADH + 5 H(+)(in) = a quinol + NAD(+) + 4 H(+)(out). In terms of biological role, NDH-1 shuttles electrons from NADH, via FMN and iron-sulfur (Fe-S) centers, to quinones in the respiratory chain. The immediate electron acceptor for the enzyme in this species is believed to be ubiquinone. Couples the redox reaction to proton translocation (for every two electrons transferred, four hydrogen ions are translocated across the cytoplasmic membrane), and thus conserves the redox energy in a proton gradient. The protein is NADH-quinone oxidoreductase subunit A of Rickettsia prowazekii (strain Madrid E).